A 140-amino-acid polypeptide reads, in one-letter code: Class I hydrophobin 1 (140 aa).

Positions 1–18 (MKFAAVVVLAAAAAAVSA) are cleaved as a signal peptide. The segment at 22–60 (AQRMARGLPPKAPIRRHGTPADTEKRSHPSSTGGGQCNT) is disordered. Intrachain disulfides connect cysteine 58/cysteine 119, cysteine 65/cysteine 113, cysteine 66/cysteine 99, and cysteine 120/cysteine 133.

The protein belongs to the fungal hydrophobin family. As to quaternary structure, self-assembles to form functional amyloid fibrils called rodlets. Self-assembly into fibrillar rodlets occurs spontaneously at hydrophobic:hydrophilic interfaces and the rodlets further associate laterally to form amphipathic monolayers.

It is found in the secreted. The protein localises to the cell wall. In terms of biological role, aerial growth, conidiation, and dispersal of filamentous fungi in the environment rely upon a capability of their secreting small amphipathic proteins called hydrophobins (HPBs) with low sequence identity. Class I can self-assemble into an outermost layer of rodlet bundles on aerial cell surfaces, conferring cellular hydrophobicity that supports fungal growth, development and dispersal; whereas Class II form highly ordered films at water-air interfaces through intermolecular interactions but contribute nothing to the rodlet structure. The protein is Class I hydrophobin 1 of Pisolithus tinctorius (Dead man's foot).